The sequence spans 2126 residues: MGLGSAASGTGADRGAWTLAEPRVTPVAVIGMACRLPGGIDSPELLWKALLRGDDLITEVPPDRWDCDEFYDPQPGVPGRTVCKWGGFLDNPADFDCEFFGIGEREAIAIDPQQRLLLETSWEAMEHAGLTQQTLAGSATGVFAGVTHGDYTMVAADAKQLEEPYGYLGNSFSMASGRVAYAMRLHGPAITVDTACSSGLTAVHMACRSLHEGESDVALAGGVALMLEPRKAAAGSALGMLSPTGRCRAFDVAADGFVSGEGCAVVVLKRLPDALADGDRILAVIRGTSANQDGHTVNIATPSQPAQVAAYRAALAAGGVDAATVGMVEAHGPGTPIGDPIEYASVSEVYGVDGPCALASVKTNFGHTQSTAGVLGLIKVVLALKHGVVPRNLHFTRLPDEIAGITTNLFVPEVTTPWPTNGRQVPRRAAVSSYGFSGTNVHAVVEQAPQTEAQPHAASTPPTGTPALFTLSASSADALRQTAQRLTDWIQQHADSLVLSDLAYTLARRRTHRSVRTAVIASSVDELIAGLGEVADGDTVYQPAVGQDDRGPVWLFSGQGSQWAAMGADLLTNESVFAATVAELEPLIAAESGFSVTEAMTAPETVTGIDRVQPTIFAMQVALAATMAAYGVRPGAVIGHSMGESAAAVVAGVLSAEDGVRVICRRSKLMATIAGSAAMASVELPALAVQSELTALGIDDVVVAVVTAPQSTVIAGGTESVRKLVDIWERRDVLARAVAVDVASHSPQVDPILDELIAALADLNPKAPEIPYYSATLFDPREAPACDARYWADNLRHTVRFSAAVRSALDDGYRVFAELSPHPLLTHAGDQIAGSVGMPVAALAGMRREQPLPLGLRRLLTDLHNAGAAVDFSVLCPQGRLVDAPLPAWSHRFLFYDREGVDNRSPGGSTVAVHPLLGAHVRLPEEPERHAWQADVGTATLPWLGDHRIHNVAALPGAAYCEMALSAARAVLGEQSEVRDMRFEAMLLLDDQTPVSTVATVTSPGVVDFAVEALQEGVGHHLRRASAVLQQVSGECEPPAYDMASLLEAHPCRVDGEDLRRQFDKHGVQYGPAFTGLAVAYVAEDATATMLAEVALPGSIRSQQGLYAIHPALLDACFQSVGAHPDSQSVGSGLLVPLGVRRVRAYAPVRTARYCYTRVTKVELVGVEADIDVLDAHGTVLLAVCGLRIGTGVSERDKHNRVLNERLLTIEWHQRELPEMDPSGAGKWLLISDCAASDVTATRLADAFREHSAACTTMRWPLHDDQLAAADQLRDQVGSDEFSGVVVLTGSNTGTPHQGSADRGAEYVRRLVGIARELSDLPGAVPRMYVVTRGAQRVLADDCVNLEQGGLRGLLRTIGAEHPHLRATQIDVDEQTGVEQLARQLLATSEEDETAWRDNEWYVARLCPTPLRPQERRTIVADHQQSGMRLQIRTPGDMQTIELAAFHRVPPGPGQIEVAVRASSVNFADVLIAFGRYPSFEGHLPQLGTDFAGVVTAVGPGVTDHKVGDHVGGMSPNGCWGTFVTCDARLAATLPPGLGDAQAAAVTTAHATAWYGLHELARIRAGDTVLIHSGTGGVGQAAIAIARAAGAEIFATAGTPQRRELLRNMGIEHVYDSRSIEFAEQIRRDTNGRGVDVVLNSVTGAAQLAGLKLLAFRGRFVEIGKRDIYGDTKLGLFPFRRNLSFYAVDLGLLSATHPEELRDLLGTVYRLTAAGELPMPQSTHYPLVEAATAIRVMGNAEHTGKLVLHIPQTGKSLVTLPPEQAQVFRPDGSYIITGGLGGLGLFLAEKMAAAGCGRIVLNSRTQPTQKMRETIEAIAAMGSEVVVECGDIAQPGTAERLVATAVATGLPVRGVLHAAAVVEDATLANITDELLARDWAPKVHGAWELHEATSGQPLDWFCLFSSAAALTGSPGQSAYSAANSWLDAFAHWRQAQGLPATAIAWGAWSDIGQLGWWSASPARASALEESNYTAITPDEGAYAFEALLRHNRVYTGYAPVIGAPWLVAFAERSRFFEVFSSSNGSGTSKFRVELNELPRDEWPARLRQLVAEQVSLILRRTVDPDRPLPEYGLDSLGALELRTRIETETGIRLAPKNVSATVRGLADHLYEQLAPDDAPAAALSSQ.

A Ketosynthase family 3 (KS3) domain is found at 24–447 (VTPVAVIGMA…GTNVHAVVEQ (424 aa)). The active-site Acyl-thioester intermediate; for beta-ketoacyl synthase activity is the cysteine 196. Residues histidine 331 and histidine 367 each act as for beta-ketoacyl synthase activity in the active site. Residues 449–549 (PQTEAQPHAA…VYQPAVGQDD (101 aa)) are linker domain (LD). An acyltransferase (AT) region spans residues 550–849 (RGPVWLFSGQ…VAALAGMRRE (300 aa)). The active-site Acyl-ester intermediate; for acyltransferase activity is the serine 641. The segment at 909–1191 (STVAVHPLLG…LAVCGLRIGT (283 aa)) is dehydratase (DH). The tract at residues 914-1032 (HPLLGAHVRL…RRASAVLQQV (119 aa)) is N-terminal hotdog fold. In terms of domain architecture, PKS/mFAS DH spans 914 to 1198 (HPLLGAHVRL…IGTGVSERDK (285 aa)). Residue histidine 947 is the Proton acceptor; for dehydratase activity of the active site. The segment at 1051–1198 (PCRVDGEDLR…IGTGVSERDK (148 aa)) is C-terminal hotdog fold. The active-site Proton donor; for dehydratase activity is aspartate 1115. The interval 1227–1398 (KWLLISDCAA…SEEDETAWRD (172 aa)) is pseudo beta-ketoacyl reductase (PsiKR). Positions 1426–1750 (SGMRLQIRTP…EHTGKLVLHI (325 aa)) are enoylreductase (ER). Positions 1772–2019 (GSYIITGGLG…AERSRFFEVF (248 aa)) are beta-ketoacyl reductase (KR). NADP(+) is bound by residues 1780–1783 (LGGL), 1803–1806 (SRTQ), 1831–1832 (DI), and 1904–1905 (FS). The region spanning 2040 to 2126 (DEWPARLRQL…DAPAAALSSQ (87 aa)) is the Carrier domain. Position 2075 is an O-(pantetheine 4'-phosphoryl)serine (serine 2075).

Pantetheine 4'-phosphate serves as cofactor.

The catalysed reaction is hexadecanoyl-[(hydroxy)phthioceranic acid synthase] + 7 (S)-methylmalonyl-CoA + 14 NADPH + 21 H(+) = C37-phthioceranyl-[(hydroxy)phthioceranic acid synthase] + 7 CO2 + 14 NADP(+) + 7 CoA + 7 H2O. It carries out the reaction hexadecanoyl-[(hydroxy)phthioceranic acid synthase] + 8 (S)-methylmalonyl-CoA + 16 NADPH + 24 H(+) = C40-phthioceranyl-[(hydroxy)phthioceranic acid synthase] + 8 CO2 + 16 NADP(+) + 8 CoA + 8 H2O. This chain is Phthioceranic/hydroxyphthioceranic acid synthase (pks2), found in Mycobacterium bovis (strain BCG / Pasteur 1173P2).